Reading from the N-terminus, the 132-residue chain is Small ribosomal subunit protein uS8 (132 aa).

The protein belongs to the universal ribosomal protein uS8 family. Part of the 30S ribosomal subunit. Contacts proteins S5 and S12.

Its function is as follows. One of the primary rRNA binding proteins, it binds directly to 16S rRNA central domain where it helps coordinate assembly of the platform of the 30S subunit. In Corynebacterium jeikeium (strain K411), this protein is Small ribosomal subunit protein uS8.